The primary structure comprises 595 residues: L-allo-isoleucine:holo-[CmaA peptidyl-carrier protein] ligase (595 aa).

The Carrier domain maps to 507–582 (VVSPQAGSAV…EWVQYYATHA (76 aa)). At serine 542 the chain carries O-(pantetheine 4'-phosphoryl)serine.

The protein belongs to the ATP-dependent AMP-binding enzyme family. In terms of assembly, homodimer. The cofactor is pantetheine 4'-phosphate.

It catalyses the reaction L-alloisoleucine + holo-[CmaA peptidyl-carrier protein] + ATP = L-alloisoleucyl-[CmaA peptidyl-carrier protein] + AMP + diphosphate. Its function is as follows. Involved in the biosynthesis of the phytotoxin coronatine (COR) which mimics the plant hormone jasmonic acid isoleucine and promotes opening of stomata for bacterial entry, bacterial growth in the apoplast, systemic susceptibility, and disease symptoms. CmaA catalyzes the adenylation of L-allo-isoleucine (via the A domain) and the attachment of L-allo-isoleucine to the 4'-phosphopantetheine arm located within the T domain of CmaA. It can also use L-isoleucine, L-leucine and L-valine as substrates. This Pseudomonas savastanoi pv. glycinea (Pseudomonas syringae pv. glycinea) protein is L-allo-isoleucine:holo-[CmaA peptidyl-carrier protein] ligase.